Consider the following 1027-residue polypeptide: Circadian locomoter output cycles protein kaput (1027 aa).

Positions 15-65 (LCRKSRNLSEKKRRDQFNSLVNDLSALISTSSRKMDKSTVLKSTIAFLKNH) constitute a bHLH domain. PAS domains are found at residues 88 to 160 (NDEY…VIEP) and 255 to 321 (REMS…ELRQ). Disordered stretches follow at residues 377–402 (RKEG…ASTG), 443–575 (TSPA…QQLQ), 765–800 (QQMM…TQQQ), 869–911 (TINP…NNED), and 926–1027 (SINF…GSSQ). The segment covering 383–402 (SGNSNSITNNGSSKVIASTG) has biased composition (low complexity). Residues 443–486 (TSPAVDSSPMWSASAVQPSGSCQINPLKTSRPASSYGNISSTGI) are compositionally biased toward polar residues. Low complexity-rich tracts occupy residues 504–516 (SDST…SVTS) and 552–575 (QQQQ…QQLQ). An implicated in the circadian rhythmicity region spans residues 780-1027 (QHNLQQQHQS…SPHTAPGSSQ (248 aa)). 2 stretches are compositionally biased toward low complexity: residues 871–909 (NPFN…QNNN) and 951–995 (SGSN…NQNQ). A compositionally biased stretch (polar residues) spans 1006 to 1027 (QMSQEQSQNLFNSPHTAPGSSQ).

In terms of assembly, efficient DNA binding requires dimerization with another bHLH protein. Forms a heterodimer with Cycle. In terms of tissue distribution, widely expressed. Found in head, body, and appendage fractions.

Its subcellular location is the nucleus. Circadian regulator that acts as a transcription factor and generates a rhythmic output with a period of about 24 hours. Oscillates in antiphase to the cycling observed for period (PER) and timeless (TIM). According to PubMed:9742131, reaches peak abundance within several hours of the dark-light transition at ZT0 (zeitgeber 0), whereas PubMed:9616122 describes bimodal oscillating expression with maximum at ZT5 and ZT23. Clock-cycle heterodimers activate cycling transcription of PER and TIM by binding to the E-box (5'-CACGTG-3') present in their promoters. Once induced, Period and Timeless block Clock's ability to transactivate their promoters. The protein is Circadian locomoter output cycles protein kaput (Clk) of Drosophila melanogaster (Fruit fly).